The following is a 340-amino-acid chain: Ketol-acid reductoisomerase (NADP(+)) (340 aa).

In terms of domain architecture, KARI N-terminal Rossmann spans 2–181 (VKMYYEADVK…GCTKAGVIET (180 aa)). Residues 25–28 (YGSQ), Arg-48, Ser-52, and 82–85 (DERQ) contribute to the NADP(+) site. His-107 is a catalytic residue. An NADP(+)-binding site is contributed by Gly-133. The 146-residue stretch at 182–327 (SFREETETDL…EQLRGMMSWI (146 aa)) folds into the KARI C-terminal knotted domain. 4 residues coordinate Mg(2+): Asp-190, Glu-194, Glu-226, and Glu-230. Ser-251 is a binding site for substrate.

Belongs to the ketol-acid reductoisomerase family. Mg(2+) serves as cofactor.

It catalyses the reaction (2R)-2,3-dihydroxy-3-methylbutanoate + NADP(+) = (2S)-2-acetolactate + NADPH + H(+). The catalysed reaction is (2R,3R)-2,3-dihydroxy-3-methylpentanoate + NADP(+) = (S)-2-ethyl-2-hydroxy-3-oxobutanoate + NADPH + H(+). The protein operates within amino-acid biosynthesis; L-isoleucine biosynthesis; L-isoleucine from 2-oxobutanoate: step 2/4. It functions in the pathway amino-acid biosynthesis; L-valine biosynthesis; L-valine from pyruvate: step 2/4. Functionally, involved in the biosynthesis of branched-chain amino acids (BCAA). Catalyzes an alkyl-migration followed by a ketol-acid reduction of (S)-2-acetolactate (S2AL) to yield (R)-2,3-dihydroxy-isovalerate. In the isomerase reaction, S2AL is rearranged via a Mg-dependent methyl migration to produce 3-hydroxy-3-methyl-2-ketobutyrate (HMKB). In the reductase reaction, this 2-ketoacid undergoes a metal-dependent reduction by NADPH to yield (R)-2,3-dihydroxy-isovalerate. This chain is Ketol-acid reductoisomerase (NADP(+)), found in Brevibacillus brevis (strain 47 / JCM 6285 / NBRC 100599).